The following is a 718-amino-acid chain: MQKFTFFVSCAKGIELLLKDELERLGISSQEKLAGVEFEGSIKDAYKVCIYSYLASQVMLKVATDKVINQQDLYEFISSINWMDYFAVDKTFKIIISGKHYDFNNTMFVSQKTKDAIVDQFRNVTNQRPNIDTENPDNVIKLHLHKQFVNVFLCLNIDSLHKRSYRQFQGQAPLKESLAAAILIKAGWLEELKKHQPILIDPMCGSGTILIEAALMAKNIAPVLLNKEFKIFNSKFHNKELWDNLLEIAKNSQKVTNAIICGFDIDNNVLDKAQRNIYQAGVEDVVTVKRQDIRDLENEFESEGLIVTNPPYGERLYGDQLDELLDIFNGFGDRLSQDFYGWKVAVLTSFADSIKEMQLRTTKRNKFYNGAIETILYQFEINEHAKFKHETQLEKNIRIAEASVQKSDEHIDFANKLKKNLKSLKPWLKQTGLECYRLYDADIPTFAVAVDVYGEHIFLQEYRADATIDQNIAKQRFYQAIYQIHKTLDIKYENIHTRVRQRQKGKEQYQKENDKNKFHIINEFDAKFYVNFDDYLDTGIFLDHRKIRQLVAKAAKNKTLLNLFSYTCTASVHAALKGAKTTSVDMSNTYLEWGKNNFELNKLDIKKHSFIQADCISWLKTNKDKFDVIFLDPPTFSNSKRMDDILDIQRDHELLINLAMDSLKKDGILYFSNNYRRFKMSPQILEKFNCENIDKICLSRDFLSNKNIHNCWEIKYKK.

In terms of domain architecture, THUMP spans 44 to 155 (DAYKVCIYSY…KQFVNVFLCL (112 aa)).

This sequence belongs to the methyltransferase superfamily. RlmKL family.

Its subcellular location is the cytoplasm. It carries out the reaction guanosine(2445) in 23S rRNA + S-adenosyl-L-methionine = N(2)-methylguanosine(2445) in 23S rRNA + S-adenosyl-L-homocysteine + H(+). The enzyme catalyses guanosine(2069) in 23S rRNA + S-adenosyl-L-methionine = N(2)-methylguanosine(2069) in 23S rRNA + S-adenosyl-L-homocysteine + H(+). Functionally, specifically methylates the guanine in position 2445 (m2G2445) and the guanine in position 2069 (m7G2069) of 23S rRNA. The polypeptide is Ribosomal RNA large subunit methyltransferase K/L (Francisella tularensis subsp. novicida (strain U112)).